The chain runs to 219 residues: Transmembrane emp24 domain-containing protein 10 (219 aa).

The first 31 residues, methionine 1–glycine 31, serve as a signal peptide directing secretion. Residues methionine 1–glutamate 142 are required for interaction with STX17. At isoleucine 32 to arginine 185 the chain is on the lumenal side. Residues arginine 41–serine 193 form the GOLD domain. A required for TMED10 and TMED2 cis-Golgi network localization region spans residues leucine 147 to threonine 178. Dimethylated arginine is present on residues arginine 171 and arginine 176. Residue asparagine 179 is glycosylated (N-linked (GlcNAc...) asparagine). A helical transmembrane segment spans residues valine 186–phenylalanine 206. The segment at glutamine 204–glutamate 219 is interaction with COPG1. Topologically, residues tyrosine 207 to glutamate 219 are cytoplasmic. The interval tyrosine 207–glutamate 219 is interaction with ARF1 and IL1B. Residues phenylalanine 211 to phenylalanine 212 carry the COPII vesicle coat-binding motif. The COPI vesicle coat-binding signature appears at phenylalanine 211 to glutamate 219.

It belongs to the EMP24/GP25L family. In terms of assembly, predominantly dimeric and to a lesser extent monomeric in the ER. Monomer and dimer in ERGIC and cis-Golgi network. Forms homooligomer (via GOLD domain); the assembly is promoted by direct binding with leaderless cargos and may form a protein channel that facilitates cargo entry into the ERGIC. Forms heterooligomeric complexes with other members of the p24 family such as TMED2, TMED7 and TMED9. Interacts (via GOLD domain) with TMED2 (via GOLD domain); the complex is required for export of TMED10 from the ER to the cis-Golgi network; the complex is proposed to be involved in cis-Golgi network dynamics and / or biogenesis. Associates with the COPI vesicle coat subunits (coatomer). Tetramerization of the cytoplasmic domain at the Golgi membrane in vitro; the complex is proposed to interact with COPI coatomer and induce budding of the vesicles. Interacts with COPG1; the interaction involves TMED10 homodimer. Interacts with ARF1 (GDP-bound); the interaction probably involves a TMED10 oligomer. Interacts with SEC23A, SEC24B, SEC24C and SEC24D components of the coat protein complex II/COPII, indicative of an association of TMED10 with the COPII vesicle coat. Interacts with CD59. Interacts with MPPE1/PGAP5; the complex might recruit and sort GPI-anchored proteins to the ER-exit site, or the interaction might lead to recycling of PGAP5 between the ER and the Golgi. Interacts with F2LR1/PAR2. Interacts with KDELR2/ERD2; the interaction is disrupted by KDELR2 ligand. Found in a complex composed at least of SURF4, TMED2 and TMED10. Associates with the presenilin-dependent gamma-secretase complex. Interacts with STX17; the interaction is direct. Interacts with IL-1; the interaction is direct. Interacts with RAB21 (active GTP-bound form); the interaction is indirect and regulates TMED10 abundance and localization at the Golgi.

The protein resides in the endoplasmic reticulum membrane. The protein localises to the endoplasmic reticulum-Golgi intermediate compartment membrane. It localises to the golgi apparatus membrane. It is found in the golgi apparatus. Its subcellular location is the cis-Golgi network membrane. The protein resides in the trans-Golgi network membrane. The protein localises to the cytoplasmic vesicle. It localises to the secretory vesicle membrane. It is found in the cell membrane. Its subcellular location is the melanosome. Cargo receptor involved in protein vesicular trafficking and quality control in the endoplasmic reticulum (ER) and Golgi. The p24 protein family is a group of transmembrane proteins that bind coat protein complex I/COPI and coat protein complex II/COPII involved in vesicular trafficking between the membranes. Acts at the lumenal side for incorporation of secretory cargo molecules into transport vesicles and involved in vesicle coat formation at the cytoplasmic side. Mainly functions in the early secretory pathway and cycles between the ER, ER-Golgi intermediate compartment (ERGIC) and Golgi, mediating cargo transport through COPI and COPII-coated vesicles. In COPII vesicle-mediated anterograde transport, involved in the transport of GPI-anchored proteins by acting together with TMED2 as their cargo receptor; the function specifically implies SEC24C and SEC24D of the COPII vesicle coat and lipid raft-like microdomains of the ER. Recognizes GPI anchors structural remodeled in the ER by the GPI inositol-deacylase/PGAP1 and the metallophosphoesterase MPPE1/PGAP5. In COPI vesicle-mediated retrograde transport, involved in the biogenesis of COPI vesicles and vesicle coat recruitment. Involved in trafficking of amyloid beta A4 protein and soluble APP-beta release (independent from the modulation of gamma-secretase activity). Involved in the KDELR2-mediated retrograde transport of the toxin A subunit (CTX-A-K63)together with COPI and the COOH terminus of KDELR2. On Golgi membranes, acts as a primary receptor for ARF1-GDP, a GTP-binding protein involved in COPI-vesicle formation. Increases coatomer-dependent GTPase-activating activity of ARFGAP2 which mediates the hydrolysis of ARF1-bound GTP and therefore modulates protein trafficking from the Golgi apparatus. Involved in the exocytic trafficking of G protein-coupled receptors F2LR1/PAR2 (trypsin and tryspin-like enzyme receptor), OPRM1 (opioid receptor) and P2RY4 (UTD and UDP receptor) from the Golgi to the plasma membrane, thus contributing to receptor resensitization. In addition to its cargo receptor activity, may also act as a protein channel after oligomerization, facilitating the post-translational entry of leaderless cytoplasmic cargo into the ERGIC. Involved in the translocation into ERGIC, the vesicle entry and the secretion of leaderless cargos (lacking the secretion signal sequence), including the mature form of interleukin 1/IL-1 family members, the alpha-crystallin B chain HSPB5, the carbohydrate-binding proteins galectin-1/LGALS1 and galectin-3/LGALS3, the microtubule-associated protein Tau/MAPT, and the annexin A1/ANXA1; the translocation process is dependent on cargo protein unfolding and enhanced by chaperones HSP90AB1 and HSP90B1/GRP9. Could also associates with the presenilin-dependent gamma-secretase complex in order to regulate gamma-cleavages of the amyloid beta A4 protein to yield amyloid-beta 40/Abeta40. The chain is Transmembrane emp24 domain-containing protein 10 from Mus musculus (Mouse).